The sequence spans 258 residues: Chemokine-binding protein (258 aa).

An N-terminal signal peptide occupies residues 1–17 (MKQYIVLACMCLAAAAM). The disordered stretch occupies residues 65 to 93 (TEITESESDPDPEVESEDDSTSVEDVDPP). The segment covering 68–91 (TESESDPDPEVESEDDSTSVEDVD) has biased composition (acidic residues).

The protein belongs to the orthopoxvirus OPG001 family. As to quaternary structure, binds to host CC chemokines, such as RANTES/CCL5, MIP-1alpha/CCL3, MCP-1/CCL2 and eotaxin.

The protein resides in the secreted. Inhibits host immune defense by binding to host chemokines. Binds host CC chemokines (beta chemokines) such as RANTES with high affinity, but not CXC or C chemokines (alpha and gamma chemokines). This is Chemokine-binding protein (OPG001) from Homo sapiens (Human).